We begin with the raw amino-acid sequence, 389 residues long: tRNA pseudouridine synthase Pus10 (389 aa).

Aspartate 213 functions as the Nucleophile in the catalytic mechanism. Substrate contacts are provided by tyrosine 278 and tyrosine 350.

This sequence belongs to the pseudouridine synthase Pus10 family.

It catalyses the reaction uridine(54) in tRNA = pseudouridine(54) in tRNA. It carries out the reaction uridine(55) in tRNA = pseudouridine(55) in tRNA. Functionally, responsible for synthesis of pseudouridine from uracil-54 and uracil-55 in the psi GC loop of transfer RNAs. The chain is tRNA pseudouridine synthase Pus10 from Thermoplasma acidophilum (strain ATCC 25905 / DSM 1728 / JCM 9062 / NBRC 15155 / AMRC-C165).